The chain runs to 264 residues: Proteasome assembly chaperone 2 (264 aa).

Thr137 carries the phosphothreonine modification.

This sequence belongs to the PSMG2 family. Forms a heterodimer with PSMG1. The PSMG1-PSMG2 heterodimer interacts directly with the PSMA5 and PSMA7 proteasome alpha subunits. Post-translationally, degraded by the proteasome upon completion of 20S proteasome maturation.

It localises to the nucleus. In terms of biological role, chaperone protein which promotes assembly of the 20S proteasome as part of a heterodimer with PSMG1. The PSMG1-PSMG2 heterodimer binds to the PSMA5 and PSMA7 proteasome subunits, promotes assembly of the proteasome alpha subunits into the heteroheptameric alpha ring and prevents alpha ring dimerization. The protein is Proteasome assembly chaperone 2 of Mus musculus (Mouse).